The sequence spans 161 residues: Large ribosomal subunit protein uL16 (161 aa).

A disordered region spans residues 140–161 (LNKGNYKPAKTPVTADDSESSS).

This sequence belongs to the universal ribosomal protein uL16 family. Part of the 50S ribosomal subunit.

Functionally, binds 23S rRNA and is also seen to make contacts with the A and possibly P site tRNAs. The sequence is that of Large ribosomal subunit protein uL16 from Prochlorococcus marinus (strain NATL2A).